We begin with the raw amino-acid sequence, 194 residues long: RNA polymerase II subunit A C-terminal domain phosphatase SSU72 like protein 3 (194 aa).

It belongs to the SSU72 phosphatase family.

The protein localises to the nucleus. It catalyses the reaction O-phospho-L-seryl-[protein] + H2O = L-seryl-[protein] + phosphate. The enzyme catalyses O-phospho-L-threonyl-[protein] + H2O = L-threonyl-[protein] + phosphate. Its function is as follows. Protein phosphatase that catalyzes the dephosphorylation of the C-terminal domain of RNA polymerase II. Plays a role in RNA processing and termination. This is RNA polymerase II subunit A C-terminal domain phosphatase SSU72 like protein 3 from Homo sapiens (Human).